The following is a 298-amino-acid chain: HTH-type transcriptional regulator YhaJ (298 aa).

Residues 7-64 (LTLEALRVMDAIDRRGSFAAAADELGRVPSALSYTMQKLEEELDVVLFDRSGHRTKFT) enclose the HTH lysR-type domain. The H-T-H motif DNA-binding region spans 24-43 (FAAAADELGRVPSALSYTMQ).

The protein belongs to the LysR transcriptional regulatory family.

In terms of biological role, positive regulator partially required for expression of genes in the locus of effacement (LEE) large pathogenicity island (PAI). Also partially responsible for expression of neighboring gene dlsT (yhaO) during late exponential growth. Binds to DNA of promoter 1 in LEE and DNA from the dlsT promoter region. The sequence is that of HTH-type transcriptional regulator YhaJ (yhaJ) from Escherichia coli O157:H7.